Here is a 565-residue protein sequence, read N- to C-terminus: Hemagglutinin-neuraminidase (565 aa).

Residues 1–20 are Intravirion-facing; sequence MVAEDAPVRGTCRVLFRTTT. Residues 21-41 traverse the membrane as a helical segment; that stretch reads LIFLCTLLALSISILYESLII. Over 42–565 the chain is Virion surface; sequence RKQIMSQAGS…VPFIRQVTLS (524 aa). Residues asparagine 110 and asparagine 139 are each glycosylated (N-linked (GlcNAc...) asparagine; by host). 3 cysteine pairs are disulfide-bonded: cysteine 161-cysteine 185, cysteine 175-cysteine 236, and cysteine 227-cysteine 240. The involved in neuraminidase activity stretch occupies residues 223–228; sequence NRKSCS. Residue asparagine 267 is glycosylated (N-linked (GlcNAc...) asparagine; by host). 3 cysteine pairs are disulfide-bonded: cysteine 333–cysteine 454, cysteine 365–cysteine 375, and cysteine 448–cysteine 458. Residue asparagine 504 is glycosylated (N-linked (GlcNAc...) asparagine; by host). A disulfide bridge links cysteine 528 with cysteine 539.

The protein belongs to the paramyxoviruses hemagglutinin-neuraminidase family. As to quaternary structure, homotetramer; composed of disulfide-linked homodimers. Interacts with F protein trimer.

The protein localises to the virion membrane. It localises to the host cell membrane. The enzyme catalyses Hydrolysis of alpha-(2-&gt;3)-, alpha-(2-&gt;6)-, alpha-(2-&gt;8)- glycosidic linkages of terminal sialic acid residues in oligosaccharides, glycoproteins, glycolipids, colominic acid and synthetic substrates.. Its function is as follows. Attaches the virus to sialic acid-containing cell receptors and thereby initiating infection. Binding of HN protein to the receptor induces a conformational change that allows the F protein to trigger virion/cell membranes fusion. Functionally, neuraminidase activity ensures the efficient spread of the virus by dissociating the mature virions from the neuraminic acid containing glycoproteins. The chain is Hemagglutinin-neuraminidase (HN) from Canis lupus familiaris (Dog).